We begin with the raw amino-acid sequence, 633 residues long: GTPase-GDP dissociation stimulator BEM4 (633 aa).

As to quaternary structure, interacts with CDC42; the interaction is direct. Interacts with RHO1; the interaction is direct. Interacts with RHO2. Interacts with RHO4. Interacts with CDC11.

Its subcellular location is the nucleus. It localises to the cytoplasm. Its function is as follows. Probably acts as a GEF (guanine nucleotide exchange factor) for the Rho family of small GTP-binding proteins (G proteins) that stimulates the dissociation of GDP to enable subsequent binding of GTP. May also chaperone the processing and/or trafficking of small GTPases independently of GEF activity. Involved in the control of polarized cell growth via CDC42-mediated signaling. Involved in the control of cell-wall organization via RHO1-mediated signaling. May also function via RHO2 and RHO4. This is GTPase-GDP dissociation stimulator BEM4 from Saccharomyces cerevisiae (strain ATCC 204508 / S288c) (Baker's yeast).